Consider the following 206-residue polypeptide: 21.9 kDa heat shock protein (206 aa).

An N-terminal signal peptide occupies residues 1-29 (MAAVAEREVLGMVAAVAAMVVMMAPPAAA). The 123-residue stretch at 65–187 (EPAAVALARC…GREPRVVAID (123 aa)) folds into the sHSP domain. The Cell attachment site signature appears at 94-96 (RGD).

This sequence belongs to the small heat shock protein (HSP20) family. May form oligomeric structures.

It localises to the endoplasmic reticulum. This Oryza sativa subsp. japonica (Rice) protein is 21.9 kDa heat shock protein (HSP21.9).